The sequence spans 215 residues: Sodium channel regulatory subunit beta-3 (215 aa).

The first 24 residues, 1–24 (MPAFNRLLPLASLVLIYWVRVCFP), serve as a signal peptide directing secretion. Residues 25–138 (VCVEVPSETE…EAHRPFVKTT (114 aa)) form the Ig-like C2-type domain. Topologically, residues 25–156 (VCVEVPSETE…EEAGEDFTSV (132 aa)) are extracellular. Cystine bridges form between C26/C48 and C45/C120. N95, N109, N113, and N121 each carry an N-linked (GlcNAc...) asparagine glycan. A helical transmembrane segment spans residues 157–178 (VSEIMMYILLVFLTLWLFIEMI). Residues 179 to 215 (YCYRKVSKAEEAAQENASDYLAIPSENKENSVVPVEE) are Cytoplasmic-facing.

Belongs to the sodium channel auxiliary subunit SCN3B (TC 8.A.17) family. As to quaternary structure, a voltage-gated sodium (Nav) channel consists of an ion-conducting pore-forming alpha subunit functional on its own that is regulated by one or more beta subunits. Forms homodimers and homotrimers. SCN3B is non-covalently associated with alpha subunits and induces the formation of alpha subunit oligomers, including trimers. Interacts with SCN5A/Nav1.5; regulatory subunit of SCN5A/Nav1.5. Interacts with SCN7A/Nav2.1; probable regulatory subunit of SCN7A/Nav2.1. Interacts with SCN10A; regulatory subunit of SCN10A/Nav1.8. Interacts with NFASC; probably involved in targeting the sodium channels to the nodes of Ranvier. Intramolecular disulfide bonds favor the voltage-gated sodium channel oligomeric complex assembly. Post-translationally, N-glycosylated.

Its subcellular location is the cell membrane. Functionally, regulatory subunit of multiple voltage-gated sodium (Nav) channels directly mediating the depolarization of excitable membranes. Navs, also called VGSCs (voltage-gated sodium channels) or VDSCs (voltage-dependent sodium channels), operate by switching between closed and open conformations depending on the voltage difference across the membrane. In the open conformation they allow Na(+) ions to selectively pass through the pore, along their electrochemical gradient. The influx of Na+ ions provokes membrane depolarization, initiating the propagation of electrical signals throughout cells and tissues. The accessory beta subunits participate in localization and functional modulation of the Nav channels. Modulates the activity of SCN2A/Nav1.2, causing a hyperpolarizing shift in the voltage-dependence of inactivation of the channel and increasing the fraction of channels operating in the fast gating mode. Modulates the activity of SCN5A/Nav1.5. Could also regulate the atypical sodium channel SCN7A/Nav2.1. Modulates the activity of SCN10A/Nav1.8, regulating its oligomerization and accelerating the recovery from inactivation. This is Sodium channel regulatory subunit beta-3 from Mus musculus (Mouse).